A 120-amino-acid polypeptide reads, in one-letter code: MSGRGKGAKSKSKAKSRSSRAGLQFPVGRVHRFLRKGNYANRVGAGAPVYLAAVLEYLTAEILELAGNAARDNKKSRIIPRHLQLAVRNDEELNKLLGGVTIAQGGVLPNIQAVLLPKKK.

Residues 1–18 (MSGRGKGAKSKSKAKSRS) show a composition bias toward basic residues. A disordered region spans residues 1-22 (MSGRGKGAKSKSKAKSRSSRAG). Ser-2 is modified (N-acetylserine). Position 2 is a phosphoserine (Ser-2). Gln-104 bears the N5-methylglutamine mark. Lys-119 is covalently cross-linked (Glycyl lysine isopeptide (Lys-Gly) (interchain with G-Cter in ubiquitin)).

It belongs to the histone H2A family. In terms of assembly, the nucleosome is a histone octamer containing two molecules each of H2A, H2B, H3 and H4 assembled in one H3-H4 heterotetramer and two H2A-H2B heterodimers. The octamer wraps approximately 147 bp of DNA. In terms of processing, monoubiquitination of Lys-119 gives a specific tag for epigenetic transcriptional repression. Post-translationally, phosphorylation of Ser-2 directly represses transcription.

The protein localises to the nucleus. It localises to the chromosome. In terms of biological role, core component of nucleosome. Nucleosomes wrap and compact DNA into chromatin, limiting DNA accessibility to the cellular machineries which require DNA as a template. Histones thereby play a central role in transcription regulation, DNA repair, DNA replication and chromosomal stability. DNA accessibility is regulated via a complex set of post-translational modifications of histones, also called histone code, and nucleosome remodeling. This is Late histone H2A.2.2 from Psammechinus miliaris (Green sea urchin).